Reading from the N-terminus, the 336-residue chain is UPF0324 membrane protein BR0028/BS1330_I0028 (336 aa).

A run of 11 helical transmembrane segments spans residues 9 to 26 (ILPG…AMVL), 36 to 55 (RAWL…VRSL), 68 to 90 (FSAK…ASAV), 94 to 116 (GSGL…YGIG), 128 to 150 (LVAC…VIGA), 160 to 182 (AFTA…LLGL), 189 to 211 (ILAG…VSLL), 221 to 240 (LVRV…ISGN), 247 to 269 (PGFF…LHSL), 279 to 301 (AIQY…GVDI), and 313 to 335 (LTAI…MLGV).

The protein belongs to the UPF0324 family.

The protein localises to the cell membrane. This is UPF0324 membrane protein BR0028/BS1330_I0028 from Brucella suis biovar 1 (strain 1330).